A 600-amino-acid polypeptide reads, in one-letter code: MSMRTEYCGLVTEHLLGQTVSLCGWVQRRRDHGGVIFIDLRDREGLVQVVCDPDRAEMFATAEGVRNEFCVQIKGLVRNRPDGTVNAGLKSGRIEVLCHELNVLNASVTPPFQLDDDNLSETTRLTHRVLDLRRPQMQHNLRLRYRVAIEARKYLDEQGFIDIETPMLTKSTPEGARDYLVPSRVNAGQFFALPQSPQLFKQLLMVANFDRYYQITKCFRDEDLRADRQPEFTQIDCETSFLGEQEIRDLFEDMIRHIFKTTIDVELDAKFPVMPYSEAMARFGSDKPDLRVQLEFTELTDAMKDVDFKVFSTPANAKDGRVAALRVPKGGELSRGDIDGYTEFVRIYGAKGLAWIKVNEKAKGRDGLQSPIVKNLHDASIAAILERTGAEDGDIIFFAADRAKVVNDSLGALRLKIGHSEFGKANGLVQAGWKPLWVVDFPMFEYDDEDARYVAAHHPFTSPKDEHLEYLETDPGRCLAKAYDMVLNGWEIGGGSVRIHREEVQSKVFRALKIGAEEAQLKFGFLLDALQYGAPPHGGIAFGLDRIVTMMAGADSIRDVIAFPKTQRAQDLLTQAPSPVDERQLRELHIRLRQPEQPKA.

Position 174 (glutamate 174) interacts with L-aspartate. The segment at 198–201 is aspartate; that stretch reads QLFK. An L-aspartate-binding site is contributed by arginine 220. Residues 220–222 and glutamine 229 contribute to the ATP site; that span reads RDE. Histidine 457 lines the L-aspartate pocket. Residue glutamate 491 participates in ATP binding. Residue arginine 498 coordinates L-aspartate. 543–546 is an ATP binding site; sequence GLDR.

The protein belongs to the class-II aminoacyl-tRNA synthetase family. Type 1 subfamily. As to quaternary structure, homodimer.

It is found in the cytoplasm. It carries out the reaction tRNA(Asx) + L-aspartate + ATP = L-aspartyl-tRNA(Asx) + AMP + diphosphate. Its function is as follows. Aspartyl-tRNA synthetase with relaxed tRNA specificity since it is able to aspartylate not only its cognate tRNA(Asp) but also tRNA(Asn). Reaction proceeds in two steps: L-aspartate is first activated by ATP to form Asp-AMP and then transferred to the acceptor end of tRNA(Asp/Asn). The sequence is that of Aspartate--tRNA(Asp/Asn) ligase from Burkholderia orbicola (strain AU 1054).